Consider the following 176-residue polypeptide: Shikimate kinase (176 aa).

An ATP-binding site is contributed by 12-17; that stretch reads GSGKST. Ser16 lines the Mg(2+) pocket. Asp34, Arg58, and Gly80 together coordinate substrate. Arg117 contacts ATP. Residue Arg136 coordinates substrate. Arg153 is a binding site for ATP.

The protein belongs to the shikimate kinase family. In terms of assembly, monomer. Requires Mg(2+) as cofactor.

It is found in the cytoplasm. The catalysed reaction is shikimate + ATP = 3-phosphoshikimate + ADP + H(+). It functions in the pathway metabolic intermediate biosynthesis; chorismate biosynthesis; chorismate from D-erythrose 4-phosphate and phosphoenolpyruvate: step 5/7. Catalyzes the specific phosphorylation of the 3-hydroxyl group of shikimic acid using ATP as a cosubstrate. In Mycobacterium avium (strain 104), this protein is Shikimate kinase.